A 1228-amino-acid polypeptide reads, in one-letter code: ABC transporter B family member 16 (1228 aa).

A run of 6 helical transmembrane segments spans residues 22 to 42 (MGLG…LFFI), 69 to 89 (LAML…GYCW), 145 to 167 (LPNI…MLLW), 171 to 193 (IVGF…ALIG), 251 to 271 (GIAI…TWYG), and 283 to 303 (GTVS…GQAL). Residues 22 to 311 (MGLGLIGAVG…ALSNLKYFSE (290 aa)) enclose the ABC transmembrane type-1 1 domain. An ABC transporter 1 domain is found at 346 to 582 (VEFNNVKCKY…DGKYTSLVRL (237 aa)). 381–388 (GGSGSGKS) provides a ligand contact to ATP. Asparagine 529, asparagine 593, and asparagine 628 each carry an N-linked (GlcNAc...) asparagine glycan. Residues 658–946 (ALCGCLSASL…AGTMTTDLAK (289 aa)) form the ABC transmembrane type-1 2 domain. Transmembrane regions (helical) follow at residues 667–687 (LGGA…SVFF) and 700–720 (IYVL…ISQQ). The N-linked (GlcNAc...) asparagine glycan is linked to asparagine 755. The next 2 membrane-spanning stretches (helical) occupy residues 781–801 (LLVQ…VIAW) and 805–825 (IVMI…RVLL). The N-linked (GlcNAc...) asparagine glycan is linked to asparagine 827. The next 2 helical transmembrane spans lie at 881-901 (SWLA…TSAL) and 920-940 (FFEL…AGTM). Positions 981 to 1219 (ITFLNVDFAY…GPTGSYFSLV (239 aa)) constitute an ABC transporter 2 domain. Residue asparagine 1001 is glycosylated (N-linked (GlcNAc...) asparagine). 1016-1023 (GPSRSGKS) lines the ATP pocket.

The protein belongs to the ABC transporter superfamily. ABCB family. Multidrug resistance exporter (TC 3.A.1.201) subfamily.

It is found in the membrane. The protein is ABC transporter B family member 16 (ABCB16) of Arabidopsis thaliana (Mouse-ear cress).